Reading from the N-terminus, the 291-residue chain is Probable plasmid-partitioning protein ParB (291 aa).

Belongs to the ParB family.

The sequence is that of Probable plasmid-partitioning protein ParB from Deinococcus radiodurans (strain ATCC 13939 / DSM 20539 / JCM 16871 / CCUG 27074 / LMG 4051 / NBRC 15346 / NCIMB 9279 / VKM B-1422 / R1).